The following is a 136-amino-acid chain: Non-structural protein 1 (136 aa).

Belongs to the pneumovirus non-structural protein 1 family. Monomer. Homomultimer. Heteromultimer with NS2. Interacts with the matrix protein M. Interacts with host ELOC and CUL2; this interaction allows NS1 to form an active E3 ligase with ELOC and CUL2. Interacts with host IRF3; this interaction leads to the disrupted association of IRF3 with CREBBP and thus reduced binding of IRF3 to the IFN-beta promoter. Interacts with host MAVS; this interaction prevents MAVS binding to RIGI and inhibits signaling pathway leading to interferon production. Interacts with host TRIM25 (via SPRY domain); this interaction suppresses RIGI ubiquitination and results in decreased interaction between RIGI and MAVS.

The protein resides in the host cytoplasm. It is found in the host mitochondrion. The protein localises to the host nucleus. In terms of biological role, plays a major role in antagonizing the type I IFN-mediated antiviral response by degrading or inhibiting multiple cellular factors required for either IFN induction or response pathways. Acts cooperatively with NS2 to repress activation and nuclear translocation of host IFN-regulatory factor IRF3. Also disrupts the association of IRF3 with CREBBP. Interacts with host mitochondrial-associated membrane (MAM) MAVS and prevents the interaction with RIGI. Interacts with TRIM25 to suppress TRIM25-mediated RIGI ubiquitination and thereby RIGI-MAVS interaction. Together with NS2, participates in the proteasomal degradation of host STAT2, IRF3, IRF7, TBK1 and RIGI through a NS-degradasome involving CUL2 and Elongin-C. The degradasome requires an intact mitochondrial MAVS. Decreases the levels of host TRAF3 and IKBKE/IKK-epsilon. As functions other than disruptions of the type I IFN-mediated antiviral signaling pathways, induces host SOCS1 and SOCS3 expression. Suppresses premature apoptosis by an NF-kappa-B-dependent, interferon-independent mechanism and thus facilitates virus growth. Additionally, NS1 may serve some inhibitory role in viral transcription and RNA replication. Suppresses proliferation and activation of host CD103+ CD8+ cytotoxic T-lymphocytes and Th17 helper T-lymphocytes. The sequence is that of Non-structural protein 1 (1C) from Ovis aries (Sheep).